The chain runs to 364 residues: Leucine dehydrogenase (364 aa).

The active site involves K80. NAD(+) is bound at residue 180-186 (GVGNVAY).

Belongs to the Glu/Leu/Phe/Val dehydrogenases family.

It carries out the reaction L-leucine + NAD(+) + H2O = 4-methyl-2-oxopentanoate + NH4(+) + NADH + H(+). The protein operates within amino-acid degradation; L-leucine degradation; 4-methyl-2-oxopentanoate from L-leucine (dehydrogenase route): step 1/1. Catalyzes the reversible deamination of L-leucine to 4-methyl-2-oxopentanoate. The protein is Leucine dehydrogenase (yqiT) of Bacillus subtilis (strain 168).